A 783-amino-acid chain; its full sequence is ATP-dependent DNA helicase Hel308 (783 aa).

Residues Gln29 and 47–54 (VPTASGKT) each bind ATP. The Helicase ATP-binding domain occupies 34–209 (ERGVTEGANL…WLDAELVDSD (176 aa)). The DEAH box motif lies at 154–157 (DEVH). The 202-residue stretch at 242–443 (QTAAVVADTL…EPALRTHVLA (202 aa)) folds into the Helicase C-terminal domain. Residues 744–783 (ETVGHPDPGMDGVAADTDAAPESGGEAGGDEGQASLGDFS) form a disordered region.

It belongs to the helicase family. Hel308 subfamily. As to quaternary structure, monomer.

It carries out the reaction Couples ATP hydrolysis with the unwinding of duplex DNA by translocating in the 3'-5' direction.. The catalysed reaction is ATP + H2O = ADP + phosphate + H(+). Functionally, DNA-dependent ATPase and 3'-5' DNA helicase that may be involved in repair of stalled replication forks. This is ATP-dependent DNA helicase Hel308 from Halobacterium salinarum (strain ATCC 700922 / JCM 11081 / NRC-1) (Halobacterium halobium).